The chain runs to 127 residues: Methylglyoxal synthase (127 aa).

The MGS-like domain maps to 1–127; that stretch reads MEKKIALIAH…IKGLESLILR (127 aa). Substrate-binding positions include H10, K14, 36–39, and 56–57; these read TGTT and SG. D62 acts as the Proton donor/acceptor in catalysis. H89 lines the substrate pocket.

Belongs to the methylglyoxal synthase family.

The catalysed reaction is dihydroxyacetone phosphate = methylglyoxal + phosphate. Catalyzes the formation of methylglyoxal from dihydroxyacetone phosphate. This is Methylglyoxal synthase from Borreliella afzelii (strain PKo) (Borrelia afzelii).